Here is a 200-residue protein sequence, read N- to C-terminus: Probable GTP-binding protein EngB (200 aa).

The EngB-type G domain occupies 25-199 (SGYEVAFAGR…ISLLDRWYEW (175 aa)). GTP-binding positions include 33-40 (GRSNAGKS), 60-64 (GRTQL), 78-81 (DLPG), 145-148 (TKAD), and 178-180 (FSS). Mg(2+)-binding residues include S40 and T62.

Belongs to the TRAFAC class TrmE-Era-EngA-EngB-Septin-like GTPase superfamily. EngB GTPase family. The cofactor is Mg(2+).

Necessary for normal cell division and for the maintenance of normal septation. This Legionella pneumophila (strain Corby) protein is Probable GTP-binding protein EngB.